A 374-amino-acid chain; its full sequence is Protein TAB2 homolog, chloroplastic (374 aa).

The transit peptide at 1 to 64 (MATLGFNTRR…SLSITKEQEV (64 aa)) directs the protein to the chloroplast. The interval 58–84 (ITKEQEVANEVEEDDPTSELSYLDPES) is disordered. The segment covering 64-74 (VANEVEEDDPT) has biased composition (acidic residues).

The protein localises to the plastid. It is found in the chloroplast. In terms of biological role, nuclear genome-encoded A/U-rich RNA-binding protein involved in the biogenesis of photosystem I (PSI) and II (PSII). Required for the light-controlled accumulation of PSI and PSII during early plant development. Does not seem to be required for the translation of mRNAs of the PSI subunits. The chain is Protein TAB2 homolog, chloroplastic from Arabidopsis thaliana (Mouse-ear cress).